Here is a 104-residue protein sequence, read N- to C-terminus: uncharacterized protein (104 aa).

This is an uncharacterized protein from Schizosaccharomyces pombe (strain 972 / ATCC 24843) (Fission yeast).